The sequence spans 328 residues: MAKPAKRVAVTGAAGQIAYSLLFRIANGDLLGKDQPVILQLLDLPQAQGAVKGVVMELDDCAFPLLAGVVITDDPKVAFKDADVALLVGARPRSKGMERKDLLSANAEIFTVQGAALNEVASRDVKVLVVGNPANTNAYIAMKSAPDLPKKNFTAMLRLDHNRALSQLAAKSGKPVASIEKLAVWGNHSPTMYPDFRFATAEGESLLKLINDDVWNRDTFIPTVGKRGAAIIEARGLSSAASAANAAIDHVRDWVLGTNGKWVTMGIPSDGSYGIPEDIIYGVPVTCENGEYKRVEGLEIDAFSREKMDGTLAELLEERDGVAHLLKN.

12–18 (GAAGQIA) is an NAD(+) binding site. Positions 93 and 99 each coordinate substrate. Residues N106, Q113, and 130–132 (VGN) contribute to the NAD(+) site. Substrate contacts are provided by N132 and R163. H188 functions as the Proton acceptor in the catalytic mechanism.

Belongs to the LDH/MDH superfamily. MDH type 2 family.

The enzyme catalyses (S)-malate + NAD(+) = oxaloacetate + NADH + H(+). Catalyzes the reversible oxidation of malate to oxaloacetate. This is Malate dehydrogenase from Burkholderia cenocepacia (strain HI2424).